The primary structure comprises 246 residues: Protein lin-37 homolog (246 aa).

An N-acetylmethionine modification is found at Met-1. Residues Lys-5 and Lys-7 each participate in a glycyl lysine isopeptide (Lys-Gly) (interchain with G-Cter in SUMO2) cross-link. The span at 36 to 55 shows a compositional bias: basic and acidic residues; it reads DRERLDEEPGKTSLDTHNKD. Disordered regions lie at residues 36-90 and 127-209; these read DRER…GGPQ and PTVR…LIYR. Phosphoserine occurs at positions 135 and 138. Residues 163-172 are compositionally biased toward pro residues; the sequence is LPPPTAPGPP. Thr-167 bears the Phosphothreonine mark. A phosphoserine mark is found at Ser-182 and Ser-202.

Component of the DREAM complex (also named LINC complex) at least composed of E2F4, E2F5, LIN9, LIN37, LIN52, LIN54, MYBL1, MYBL2, RBL1, RBL2, RBBP4, TFDP1 and TFDP2. The complex exists in quiescent cells where it represses cell cycle-dependent genes. It dissociates in S phase when LIN9, LIN37, LIN52 and LIN54 form a subcomplex that binds to MYBL2.

In Bos taurus (Bovine), this protein is Protein lin-37 homolog (LIN37).